We begin with the raw amino-acid sequence, 307 residues long: MTISTLGNQQDDSLVSNAFGFLRFPLNFQPYSSDAEWVITGVPFDMATSGRAGSRHGPAAIRQVSTNLAWESRRWPWDFKLHNCLKVVDCGDVVFNFGDAQDMSDKLQAHAEKVLASGKRMLSFGGDHFITLPLLRAHAKHFGKMALVHFDAHADTYPNGSQFDHGTMFYHAPNEGLIDPHHSVQIGIRTEHGRDNGFTVLDADQVNDRSVDDLLAQIKETVGDMPVYLTFDIDCLDPAFAPGTGTPVIGGLTTDRALKLLRGLQPLNIVGMDVVEVAPAYDQSEITALAGATIALEMLYLQASKKR.

H128, D151, H153, D155, D232, and D234 together coordinate Mn(2+).

This sequence belongs to the arginase family. Agmatinase subfamily. Requires Mn(2+) as cofactor.

It carries out the reaction agmatine + H2O = urea + putrescine. It functions in the pathway amine and polyamine biosynthesis; putrescine biosynthesis via agmatine pathway; putrescine from agmatine: step 1/1. Functionally, catalyzes the formation of putrescine from agmatine. The polypeptide is Agmatinase (Photorhabdus laumondii subsp. laumondii (strain DSM 15139 / CIP 105565 / TT01) (Photorhabdus luminescens subsp. laumondii)).